A 295-amino-acid polypeptide reads, in one-letter code: tRNA pseudouridine synthase A (295 aa).

Asp67 functions as the Nucleophile in the catalytic mechanism. Substrate is bound at residue Tyr125.

This sequence belongs to the tRNA pseudouridine synthase TruA family. Homodimer.

The enzyme catalyses uridine(38/39/40) in tRNA = pseudouridine(38/39/40) in tRNA. Formation of pseudouridine at positions 38, 39 and 40 in the anticodon stem and loop of transfer RNAs. The sequence is that of tRNA pseudouridine synthase A from Prochlorococcus marinus (strain MIT 9303).